The chain runs to 477 residues: Aspartyl/glutamyl-tRNA(Asn/Gln) amidotransferase subunit B (477 aa).

It belongs to the GatB/GatE family. GatB subfamily. As to quaternary structure, heterotrimer of A, B and C subunits.

The catalysed reaction is L-glutamyl-tRNA(Gln) + L-glutamine + ATP + H2O = L-glutaminyl-tRNA(Gln) + L-glutamate + ADP + phosphate + H(+). It catalyses the reaction L-aspartyl-tRNA(Asn) + L-glutamine + ATP + H2O = L-asparaginyl-tRNA(Asn) + L-glutamate + ADP + phosphate + 2 H(+). Functionally, allows the formation of correctly charged Asn-tRNA(Asn) or Gln-tRNA(Gln) through the transamidation of misacylated Asp-tRNA(Asn) or Glu-tRNA(Gln) in organisms which lack either or both of asparaginyl-tRNA or glutaminyl-tRNA synthetases. The reaction takes place in the presence of glutamine and ATP through an activated phospho-Asp-tRNA(Asn) or phospho-Glu-tRNA(Gln). This is Aspartyl/glutamyl-tRNA(Asn/Gln) amidotransferase subunit B from Legionella pneumophila subsp. pneumophila (strain Philadelphia 1 / ATCC 33152 / DSM 7513).